Consider the following 490-residue polypeptide: Adenylosuccinate lyase (490 aa).

Residue Ala2 is modified to N-acetylalanine. Substrate-binding positions include 26 to 27 (RY), 91 to 93 (RHD), and 117 to 118 (TS). Position 153 is an N6-acetyllysine (Lys153). The active-site Proton donor/acceptor is His165. Residue Gln247 participates in substrate binding. The active-site Proton donor/acceptor is Ser295. Position 301 is an N6-acetyllysine (Lys301). Substrate-binding residues include Arg309, Arg335, Ser340, and Arg344. A Glycyl lysine isopeptide (Lys-Gly) (interchain with G-Cter in SUMO1) cross-link involves residue Lys421.

The protein belongs to the lyase 1 family. Adenylosuccinate lyase subfamily. In terms of assembly, homotetramer. Residues from neighboring subunits contribute catalytic and substrate-binding residues to each active site.

The enzyme catalyses N(6)-(1,2-dicarboxyethyl)-AMP = fumarate + AMP. The catalysed reaction is (2S)-2-[5-amino-1-(5-phospho-beta-D-ribosyl)imidazole-4-carboxamido]succinate = 5-amino-1-(5-phospho-beta-D-ribosyl)imidazole-4-carboxamide + fumarate. The protein operates within purine metabolism; AMP biosynthesis via de novo pathway; AMP from IMP: step 2/2. Its pathway is purine metabolism; IMP biosynthesis via de novo pathway; 5-amino-1-(5-phospho-D-ribosyl)imidazole-4-carboxamide from 5-amino-1-(5-phospho-D-ribosyl)imidazole-4-carboxylate: step 2/2. Functionally, catalyzes two non-sequential steps in de novo AMP synthesis: converts (S)-2-(5-amino-1-(5-phospho-D-ribosyl)imidazole-4-carboxamido)succinate (SAICAR) to fumarate plus 5-amino-1-(5-phospho-D-ribosyl)imidazole-4-carboxamide, and thereby also contributes to de novo IMP synthesis, and converts succinyladenosine monophosphate (SAMP) to AMP and fumarate. The chain is Adenylosuccinate lyase (ADSL) from Bos taurus (Bovine).